The sequence spans 209 residues: Transmembrane 4 L6 family member 19 (209 aa).

Residues Met1 to Arg16 lie on the Cytoplasmic side of the membrane. The chain crosses the membrane as a helical span at residues Ile17 to Leu37. Residues Leu38–Thr59 lie on the Extracellular side of the membrane. Residues Gly60–Trp80 form a helical membrane-spanning segment. Over Arg81–Ser93 the chain is Cytoplasmic. The helical transmembrane segment at Val94–Thr114 threads the bilayer. The Extracellular segment spans residues Ser115–Ser175. Asn133 carries an N-linked (GlcNAc...) asparagine glycan. A helical membrane pass occupies residues Leu176 to Ile196. Positions Leu186 to Ile196 are important for homodimerization. Residues Asn197–Lys209 lie on the Cytoplasmic side of the membrane.

Belongs to the L6 tetraspanin family. As to quaternary structure, may form homodimers and homooligomers. Interacts with integrins ITGAV and ITGB3. Interacts with components of members of the V0 complex of vacuolar(H+)-ATPase (V-ATPase), including ATP6V0B and ATP6V0D2; this interaction inhibits V1-V0 complex assembly. In terms of tissue distribution, in adipose tissue, expressed by macrophages.

It localises to the lysosome membrane. Its subcellular location is the cytoplasm. The protein localises to the cytoskeleton. It is found in the cell projection. The protein resides in the filopodium. Negatively regulates vacuolar (H+)-ATPase (V-ATPase) activity by interacting with members of V-ATPase V0 complex and hence inhibiting V1-V0 complex assembly. Required for multinucleation during osteoclast differentiation. This is Transmembrane 4 L6 family member 19 (TM4SF19) from Homo sapiens (Human).